We begin with the raw amino-acid sequence, 406 residues long: Tryptophan synthase beta chain (406 aa).

Lys-95 carries the post-translational modification N6-(pyridoxal phosphate)lysine.

Belongs to the TrpB family. In terms of assembly, tetramer of two alpha and two beta chains. It depends on pyridoxal 5'-phosphate as a cofactor.

The enzyme catalyses (1S,2R)-1-C-(indol-3-yl)glycerol 3-phosphate + L-serine = D-glyceraldehyde 3-phosphate + L-tryptophan + H2O. Its pathway is amino-acid biosynthesis; L-tryptophan biosynthesis; L-tryptophan from chorismate: step 5/5. Its function is as follows. The beta subunit is responsible for the synthesis of L-tryptophan from indole and L-serine. The protein is Tryptophan synthase beta chain of Pseudomonas fluorescens (strain ATCC BAA-477 / NRRL B-23932 / Pf-5).